Reading from the N-terminus, the 306-residue chain is Ribosomal protein L11 methyltransferase (306 aa).

The S-adenosyl-L-methionine site is built by Thr139, Gly173, Asp195, and Asn242.

Belongs to the methyltransferase superfamily. PrmA family.

It is found in the cytoplasm. It carries out the reaction L-lysyl-[protein] + 3 S-adenosyl-L-methionine = N(6),N(6),N(6)-trimethyl-L-lysyl-[protein] + 3 S-adenosyl-L-homocysteine + 3 H(+). Methylates ribosomal protein L11. The sequence is that of Ribosomal protein L11 methyltransferase from Trichormus variabilis (strain ATCC 29413 / PCC 7937) (Anabaena variabilis).